A 603-amino-acid polypeptide reads, in one-letter code: Protein Spindly (603 aa).

Methionine 1 is modified (N-acetylmethionine). Residues 1 to 442 (MESDVIADLR…LKLKYEPEEK (442 aa)) are a coiled coil. Phosphoserine occurs at positions 513 and 553. The interval 542–577 (ALSERSRNTPNSPRLAAESRLQREVKQGKETASKLE) is disordered. Over residues 561-577 (RLQREVKQGKETASKLE) the composition is skewed to basic and acidic residues.

Belongs to the Spindly family. In terms of assembly, interacts with KNTC1 and ZW10. These interactions appear weak and may be transient or indirect. Interacts with dynein intermediate chain and dynactin (DCTN1). Interacts with the catalytically active form of USP45. In terms of processing, monoubiquitinated with'Lys-48' linkage. Deubiquitinated by USP45.

The protein localises to the cytoplasm. It localises to the cytoskeleton. Its subcellular location is the microtubule organizing center. The protein resides in the centrosome. It is found in the chromosome. The protein localises to the centromere. It localises to the kinetochore. Its subcellular location is the nucleus. The protein resides in the spindle pole. In terms of biological role, required for the localization of dynein and dynactin to the mitotic kintochore. Dynein is believed to control the initial lateral interaction between the kinetochore and spindle microtubules and to facilitate the subsequent formation of end-on kinetochore-microtubule attachments mediated by the NDC80 complex. Also required for correct spindle orientation. Does not appear to be required for the removal of spindle assembly checkpoint (SAC) proteins from the kinetochore upon bipolar spindle attachment. Acts as an adapter protein linking the dynein motor complex to various cargos and converts dynein from a non-processive to a highly processive motor in the presence of dynactin. Facilitates the interaction between dynein and dynactin and activates dynein processivity (the ability to move along a microtubule for a long distance without falling off the track). Plays a role in cell migration. This is Protein Spindly from Bos taurus (Bovine).